The chain runs to 297 residues: Translocase of chloroplast 33, chloroplastic (297 aa).

The AIG1-type G domain maps to 34-258 (MNSMTVLVLG…HVDKKMVDGS (225 aa)). Residues 37 to 53 (MTVLVLGKGGVGKSSTV) traverse the membrane as a helical segment. Residues 46–51 (GVGKSS) and 65–70 (SPFQAE) each bind GTP. Mg(2+) is bound by residues Ser50 and Gln68. Homodimerization regions lie at residues 65-68 (SPFQ) and 125-130 (RLDVYR). His160 contacts GTP. Phosphoserine is present on Ser181. 208-209 (EN) is a binding site for GTP.

The protein belongs to the TRAFAC class TrmE-Era-EngA-EngB-Septin-like GTPase superfamily. AIG1/Toc34/Toc159-like paraseptin GTPase family. TOC34 subfamily. As to quaternary structure, homodimer, heterodimer with TOC34 and TOC159, and monomer. The homodimerization and the dimerization with TOC159 require the binding of GTP on Arg-130, and a hypothetical coGAP factor. The dimeric form has a higher GTPase activity than the monomeric form. Part of the TOC core complex that includes 1 protein for the specific recognition of transit peptides surrounded by a ring composed of four proteins forming translocation channels, and four to five GTP-binding proteins providing energy. This core complex can interact with components of the TIC complex to form a larger import complex. Chloroplastic protein precursor such as prSS (precursor of the RuBisCO small subunit) interacts with these complexes. The TOC complex contains a specific subset of polar lipids such as digalactosyldiacylglyceride (DGDG), phosphatidylcholine (PC) and phosphatidylglycerol (PG). Interacts at least with TOC75-3. Forms large complexes including TOC33, pPORA and OEP161 during pPORA import into plastids at the plastid envelope membrane. Interacts with SP1. Mg(2+) is required as a cofactor. In terms of processing, phosphorylated by a kinase present in the outer envelope of chloroplast. When Ser-181 is phosphorylated, the binding to preprotein, GTP and GDP is inhibited, and thus, GTPase activity is repressed. In terms of tissue distribution, mostly expressed in seedlings and flowers, and, to a lower extent, in roots, stems, and leaves.

The protein resides in the plastid. It is found in the chloroplast outer membrane. In terms of biological role, GTPase involved in protein precursor import into chloroplasts. Seems to recognize chloroplast-destined precursor proteins and regulate their presentation to the translocation channel through GTP hydrolysis. Binds GTP, GDP, XTP, but not ATP. Probably specialized in the import of nuclear encoded photosynthetic preproteins from the cytoplasm to the chloroplast, especially during early development stages. The chain is Translocase of chloroplast 33, chloroplastic (TOC33) from Arabidopsis thaliana (Mouse-ear cress).